The chain runs to 270 residues: 23S rRNA (adenosine(1067)-2'-O)-methyltransferase (270 aa).

5 residues coordinate S-adenosyl-L-methionine: Arg-135, Arg-165, Gly-218, Ile-238, and Leu-247.

This sequence belongs to the class IV-like SAM-binding methyltransferase superfamily. RNA methyltransferase TsnR/AvirB family.

It catalyses the reaction adenosine(1067) in 23S rRNA + S-adenosyl-L-methionine = 2'-O-methyladenosine(1067) in 23S rRNA + S-adenosyl-L-homocysteine + H(+). Specifically methylates the adenosine-1067 in 23S ribosomal RNA. Confers resistance to antibiotic thiostrepton. The protein is 23S rRNA (adenosine(1067)-2'-O)-methyltransferase of Streptomyces laurentii.